Consider the following 983-residue polypeptide: Nitrate reductase [NADPH] (983 aa).

Low complexity-rich tracts occupy residues 1-14 (MTIS…SSKT) and 26-48 (SSSS…SSPT). Residues 1 to 50 (MTISTTSSSTSSKTSSEKGDDLKGFSSSSSPASSRSSSATTPEPSSPTVL) form a disordered region. Cysteine 184 provides a ligand contact to Mo-molybdopterin. The region spanning 585-662 (DTIITAADLA…LRDFHLGRLE (78 aa)) is the Cytochrome b5 heme-binding domain. Positions 622 and 645 each coordinate heme. The FAD-binding FR-type domain maps to 688–815 (KKWRATRLVS…KGPLGSFTYL (128 aa)). Residues 746-749 (RAYT), 763-767 (LIKVY), phenylalanine 768, phenylalanine 780, 784-786 (KMT), serine 841, and threonine 844 each bind FAD. 952 to 961 (LALVCGPPPM) serves as a coordination point for NADP(+).

Belongs to the nitrate reductase family. As to quaternary structure, homodimer. It depends on FAD as a cofactor. Requires heme as cofactor. Mo-molybdopterin serves as cofactor.

The enzyme catalyses nitrite + NADP(+) + H2O = nitrate + NADPH + H(+). Its pathway is nitrogen metabolism; nitrate reduction (assimilation). Nitrate reductase is a key enzyme involved in the first step of nitrate assimilation in plants, fungi and bacteria. The polypeptide is Nitrate reductase [NADPH] (NAR1) (Mycosarcoma maydis (Corn smut fungus)).